A 260-amino-acid polypeptide reads, in one-letter code: tRNA (guanine-N(1)-)-methyltransferase (260 aa).

Residues Gly117 and 137–142 (LGDFVL) contribute to the S-adenosyl-L-methionine site.

Belongs to the RNA methyltransferase TrmD family. As to quaternary structure, homodimer.

Its subcellular location is the cytoplasm. It carries out the reaction guanosine(37) in tRNA + S-adenosyl-L-methionine = N(1)-methylguanosine(37) in tRNA + S-adenosyl-L-homocysteine + H(+). In terms of biological role, specifically methylates guanosine-37 in various tRNAs. This chain is tRNA (guanine-N(1)-)-methyltransferase, found in Cupriavidus necator (strain ATCC 17699 / DSM 428 / KCTC 22496 / NCIMB 10442 / H16 / Stanier 337) (Ralstonia eutropha).